Consider the following 52-residue polypeptide: Large ribosomal subunit protein eL39 (52 aa).

It belongs to the eukaryotic ribosomal protein eL39 family. As to quaternary structure, interacts with YIH1.

The sequence is that of Large ribosomal subunit protein eL39 (RPL39) from Encephalitozoon cuniculi (strain GB-M1) (Microsporidian parasite).